The sequence spans 537 residues: Eukaryotic translation initiation factor 3 subunit L (537 aa).

Residues 301–513 (TFSSILLYIQ…IHIADTKVSH (213 aa)) form the PCI domain.

It belongs to the eIF-3 subunit L family. As to quaternary structure, component of the eukaryotic translation initiation factor 3 (eIF-3) complex.

The protein resides in the cytoplasm. Component of the eukaryotic translation initiation factor 3 (eIF-3) complex, which is involved in protein synthesis of a specialized repertoire of mRNAs and, together with other initiation factors, stimulates binding of mRNA and methionyl-tRNAi to the 40S ribosome. The eIF-3 complex specifically targets and initiates translation of a subset of mRNAs involved in cell proliferation. The protein is Eukaryotic translation initiation factor 3 subunit L of Aedes aegypti (Yellowfever mosquito).